The chain runs to 317 residues: Probable cell division protein WhiA (317 aa).

The segment at residues 267-300 is a DNA-binding region (H-T-H motif); that stretch reads SLKELGEMLHPPVGKSGVNHRLRRLELIARQVRG.

This sequence belongs to the WhiA family.

Functionally, involved in cell division and chromosome segregation. This Moorella thermoacetica (strain ATCC 39073 / JCM 9320) protein is Probable cell division protein WhiA.